Reading from the N-terminus, the 353-residue chain is Quinolinate synthase (353 aa).

2 residues coordinate iminosuccinate: His-49 and Ser-70. Cys-115 lines the [4Fe-4S] cluster pocket. Residues 141–143 (YAN) and Ser-158 contribute to the iminosuccinate site. Cys-202 lines the [4Fe-4S] cluster pocket. Residues 228-230 (HPE) and Thr-245 contribute to the iminosuccinate site. Residue Cys-299 participates in [4Fe-4S] cluster binding.

The protein belongs to the quinolinate synthase family. Type 1 subfamily. The cofactor is [4Fe-4S] cluster.

Its subcellular location is the cytoplasm. It carries out the reaction iminosuccinate + dihydroxyacetone phosphate = quinolinate + phosphate + 2 H2O + H(+). It functions in the pathway cofactor biosynthesis; NAD(+) biosynthesis; quinolinate from iminoaspartate: step 1/1. In terms of biological role, catalyzes the condensation of iminoaspartate with dihydroxyacetone phosphate to form quinolinate. The polypeptide is Quinolinate synthase (Hahella chejuensis (strain KCTC 2396)).